Here is a 612-residue protein sequence, read N- to C-terminus: Dihydroxy-acid dehydratase (612 aa).

Asp-81 lines the Mg(2+) pocket. A [2Fe-2S] cluster-binding site is contributed by Cys-122. Residues Asp-123 and Lys-124 each coordinate Mg(2+). Position 124 is an N6-carboxylysine (Lys-124). Cys-193 contacts [2Fe-2S] cluster. Glu-489 lines the Mg(2+) pocket. The active-site Proton acceptor is Ser-515.

This sequence belongs to the IlvD/Edd family. In terms of assembly, homodimer. [2Fe-2S] cluster is required as a cofactor. Requires Mg(2+) as cofactor.

It carries out the reaction (2R)-2,3-dihydroxy-3-methylbutanoate = 3-methyl-2-oxobutanoate + H2O. It catalyses the reaction (2R,3R)-2,3-dihydroxy-3-methylpentanoate = (S)-3-methyl-2-oxopentanoate + H2O. The protein operates within amino-acid biosynthesis; L-isoleucine biosynthesis; L-isoleucine from 2-oxobutanoate: step 3/4. It functions in the pathway amino-acid biosynthesis; L-valine biosynthesis; L-valine from pyruvate: step 3/4. Functionally, functions in the biosynthesis of branched-chain amino acids. Catalyzes the dehydration of (2R,3R)-2,3-dihydroxy-3-methylpentanoate (2,3-dihydroxy-3-methylvalerate) into 2-oxo-3-methylpentanoate (2-oxo-3-methylvalerate) and of (2R)-2,3-dihydroxy-3-methylbutanoate (2,3-dihydroxyisovalerate) into 2-oxo-3-methylbutanoate (2-oxoisovalerate), the penultimate precursor to L-isoleucine and L-valine, respectively. This chain is Dihydroxy-acid dehydratase, found in Ectopseudomonas mendocina (strain ymp) (Pseudomonas mendocina).